The following is a 186-amino-acid chain: Elongation factor P (186 aa).

It belongs to the elongation factor P family.

The protein localises to the cytoplasm. It participates in protein biosynthesis; polypeptide chain elongation. In terms of biological role, involved in peptide bond synthesis. Stimulates efficient translation and peptide-bond synthesis on native or reconstituted 70S ribosomes in vitro. Probably functions indirectly by altering the affinity of the ribosome for aminoacyl-tRNA, thus increasing their reactivity as acceptors for peptidyl transferase. This is Elongation factor P from Brucella canis (strain ATCC 23365 / NCTC 10854 / RM-666).